The chain runs to 998 residues: Mis18-binding protein 1 (998 aa).

A Glycyl lysine isopeptide (Lys-Gly) (interchain with G-Cter in SUMO2) cross-link involves residue Lys7. 3 positions are modified to phosphoserine: Ser9, Ser109, and Ser134. Residues 122–153 (QRDKQEQLTRSSSMLGSPQGEHTKDFPPNTDK) are disordered. Residues 142–153 (EHTKDFPPNTDK) show a composition bias toward basic and acidic residues. A phosphoserine mark is found at Ser169 and Ser258. The region spanning 336–422 (VHLQEWMIKV…MFGFPHNWKE (87 aa)) is the SANTA domain. 2 disordered regions span residues 438 to 460 (KTRQETARVQEKQKSKKKDAEDK) and 476 to 502 (DNSLERTEVPTDPLNSLEQPTSGKERR). The segment covering 488–497 (PLNSLEQPTS) has biased composition (polar residues). Phosphothreonine is present on residues Thr516 and Thr578. 2 positions are modified to phosphoserine: Ser638 and Ser639. A disordered region spans residues 638–660 (SSEENEVEIKSRTRARNTKERLN). The segment covering 644–660 (VEIKSRTRARNTKERLN) has biased composition (basic and acidic residues). Thr688 bears the Phosphothreonine mark. A Glycyl lysine isopeptide (Lys-Gly) (interchain with G-Cter in SUMO2) cross-link involves residue Lys707. Residue Ser726 is modified to Phosphoserine. Residues 741-796 (TDDEEWSEQELQKLHCAFTSLPKHKPGFWSDVAMAVGSRTADECQKKYTEEPQGQG) enclose the SANT domain. Lys765 participates in a covalent cross-link: Glycyl lysine isopeptide (Lys-Gly) (interchain with G-Cter in SUMO2). Residues 784–821 (CQKKYTEEPQGQGSRKHGSKKKQANKVQNGEKDSADAK) form a disordered region. Basic residues predominate over residues 797–807 (SRKHGSKKKQA). The segment covering 812-821 (NGEKDSADAK) has biased composition (basic and acidic residues). Glycyl lysine isopeptide (Lys-Gly) (interchain with G-Cter in SUMO2) cross-links involve residues Lys821, Lys828, and Lys847. Ser872 carries the post-translational modification Phosphoserine. Lys948 is covalently cross-linked (Glycyl lysine isopeptide (Lys-Gly) (interchain with G-Cter in SUMO2)). A phosphoserine mark is found at Ser955 and Ser985. A disordered region spans residues 976–998 (SKYFIDDTESDEEEKDYYFSNSD). Positions 981–990 (DDTESDEEEK) are enriched in acidic residues.

As to quaternary structure, interacts with SP1. Interacts with MIS18A. Identified in a complex containing MIS18A, OIP5/MIS18B, MIS18BP1, RBBP7 and RBBP4. Interacts with KAT7/HBO1. Interacts (via N-terminus) with FLNA (via N-terminus).

It localises to the nucleus. It is found in the chromosome. The protein localises to the centromere. In terms of biological role, required for recruitment of CENPA to centromeres and normal chromosome segregation during mitosis. The polypeptide is Mis18-binding protein 1 (Mis18bp1) (Mus musculus (Mouse)).